The sequence spans 174 residues: Small ribosomal subunit protein uS5 (174 aa).

Residues 19-82 (LREKMIAVNR…EQARRGMFKV (64 aa)) form the S5 DRBM domain.

This sequence belongs to the universal ribosomal protein uS5 family. Part of the 30S ribosomal subunit. Contacts proteins S4 and S8.

Functionally, with S4 and S12 plays an important role in translational accuracy. Located at the back of the 30S subunit body where it stabilizes the conformation of the head with respect to the body. The protein is Small ribosomal subunit protein uS5 of Bordetella bronchiseptica (strain ATCC BAA-588 / NCTC 13252 / RB50) (Alcaligenes bronchisepticus).